We begin with the raw amino-acid sequence, 380 residues long: Cytochrome b (380 aa).

4 consecutive transmembrane segments (helical) span residues 33-53, 77-98, 113-133, and 178-198; these read FGSL…FLAM, WLLR…YLHI, WNIG…GYVL, and FFTF…LHLL. Residues H83 and H97 each contribute to the heme b site. Heme b is bound by residues H182 and H196. H201 contacts a ubiquinone. Transmembrane regions (helical) follow at residues 226–246, 288–308, 320–340, and 347–367; these read YKDL…ALLN, LGGV…PVLH, PSQT…WIGG, and FIII…ILIP.

This sequence belongs to the cytochrome b family. In terms of assembly, the cytochrome bc1 complex contains 3 respiratory subunits (MT-CYB, CYC1 and UQCRFS1), 2 core proteins (UQCRC1 and UQCRC2) and probably 6 low-molecular weight proteins. It depends on heme b as a cofactor.

The protein resides in the mitochondrion inner membrane. In terms of biological role, component of the ubiquinol-cytochrome c reductase complex (complex III or cytochrome b-c1 complex) that is part of the mitochondrial respiratory chain. The b-c1 complex mediates electron transfer from ubiquinol to cytochrome c. Contributes to the generation of a proton gradient across the mitochondrial membrane that is then used for ATP synthesis. The chain is Cytochrome b (mt-cyb) from Atractosteus spatula (Alligator gar).